The primary structure comprises 582 residues: Putative transcriptional regulator HVO_1357 (582 aa).

Residues 19 to 129 form the Response regulatory domain; sequence VVLVVDDDED…EVKETVEELL (111 aa). D67 carries the post-translational modification 4-aspartylphosphate. The stretch at 165–203 forms a coiled coil; it reads LSDLRSRLEAVRAEHEAAIRNREAQLDRLNRTNELLRDV. The 53-residue stretch at 517–569 folds into the HTH bat-type domain; that stretch reads LTDRQRTVLETSLVSGYFEWPRGSTAEEVADSLGISPPTLHEHLRTAERKLIE.

May be part of a signal-dependent gene regulation cascade that is relevant to swimming motility. May be involved in the transcription regulation of target genes. In Haloferax volcanii (strain ATCC 29605 / DSM 3757 / JCM 8879 / NBRC 14742 / NCIMB 2012 / VKM B-1768 / DS2) (Halobacterium volcanii), this protein is Putative transcriptional regulator HVO_1357.